A 122-amino-acid polypeptide reads, in one-letter code: Large ribosomal subunit protein uL18 (122 aa).

It belongs to the universal ribosomal protein uL18 family. Part of the 50S ribosomal subunit; part of the 5S rRNA/L5/L18/L25 subcomplex. Contacts the 5S and 23S rRNAs.

This is one of the proteins that bind and probably mediate the attachment of the 5S RNA into the large ribosomal subunit, where it forms part of the central protuberance. The chain is Large ribosomal subunit protein uL18 from Mycobacterium avium (strain 104).